Here is a 267-residue protein sequence, read N- to C-terminus: tRNA pseudouridine synthase A (267 aa).

The active-site Nucleophile is D53. Substrate is bound at residue Y114.

This sequence belongs to the tRNA pseudouridine synthase TruA family. As to quaternary structure, homodimer.

The catalysed reaction is uridine(38/39/40) in tRNA = pseudouridine(38/39/40) in tRNA. Formation of pseudouridine at positions 38, 39 and 40 in the anticodon stem and loop of transfer RNAs. The sequence is that of tRNA pseudouridine synthase A from Chlamydia muridarum (strain MoPn / Nigg).